The sequence spans 120 residues: Small ribosomal subunit protein uS13 (120 aa).

Positions 92–120 are disordered; sequence HRKGLPVRGQTTKNNARTRKGKKKTVGSK. Residues 107 to 120 are compositionally biased toward basic residues; the sequence is ARTRKGKKKTVGSK.

It belongs to the universal ribosomal protein uS13 family. In terms of assembly, part of the 30S ribosomal subunit. Forms a loose heterodimer with protein S19. Forms two bridges to the 50S subunit in the 70S ribosome.

Located at the top of the head of the 30S subunit, it contacts several helices of the 16S rRNA. In the 70S ribosome it contacts the 23S rRNA (bridge B1a) and protein L5 of the 50S subunit (bridge B1b), connecting the 2 subunits; these bridges are implicated in subunit movement. Contacts the tRNAs in the A and P-sites. The sequence is that of Small ribosomal subunit protein uS13 from Helicobacter pylori (strain J99 / ATCC 700824) (Campylobacter pylori J99).